The chain runs to 307 residues: Recombination-associated protein RdgC (307 aa).

This sequence belongs to the RdgC family.

It is found in the cytoplasm. Its subcellular location is the nucleoid. In terms of biological role, may be involved in recombination. In Burkholderia orbicola (strain MC0-3), this protein is Recombination-associated protein RdgC.